Here is a 166-residue protein sequence, read N- to C-terminus: Urocortin-3 (166 aa).

Residues 1 to 23 (MLVPAPFLLVLLLLLGAPQVGLS) form the signal peptide. Positions 24–123 (QRSPKAGSSP…QDKAKSDRRT (100 aa)) are excised as a propeptide. Residues 41–51 (REAEKSQRKDT) show a composition bias toward basic and acidic residues. The interval 41–123 (REAEKSQRKD…QDKAKSDRRT (83 aa)) is disordered. Over residues 68–77 (EDQEGQEEED) the composition is skewed to acidic residues. Gly residues predominate over residues 86 to 96 (SVGGGGGGGAG). Residues 113 to 123 (SQDKAKSDRRT) are compositionally biased toward basic and acidic residues. At isoleucine 162 the chain carries Isoleucine amide.

Belongs to the sauvagine/corticotropin-releasing factor/urotensin I family. As to quaternary structure, binds with high affinity to CRF receptors 2-alpha and 2-beta.

It is found in the secreted. Suppresses food intake, delays gastric emptying and decreases heat-induced edema. Might represent an endogenous ligand for maintaining homeostasis after stress. The sequence is that of Urocortin-3 (UCN3) from Bos taurus (Bovine).